Reading from the N-terminus, the 77-residue chain is UPF0401 protein ECP_3853 (77 aa).

The protein belongs to the UPF0401 family.

The sequence is that of UPF0401 protein ECP_3853 from Escherichia coli O6:K15:H31 (strain 536 / UPEC).